Here is a 638-residue protein sequence, read N- to C-terminus: MSKHVHIQLPDGQIQEYPKGITIKEAAGSISSSLQKKAAAGQVNGKLVDLSFKLEEDAELSIVTLDSQEGLQVLRHTTAHVLAQAVKRLYGEVSLGVGPVILDGFYYDMKLGKSLASGDLEAIEKEMKNIINENLEIKRIEVSYEEAEELFAQKDERLKLEILKDIPRGEDITLYQQGEFVDLCRGPHLPSTGMIKAFKLTRVSGAYWRGDSKNEVLQRVYGVAFQKKKDLDAHLHMLEEAAKRDHRKLGKQLGLFMFSEEAPGMPFYLPKGQIVRNELERFSRELQTNAGYDEVRTPFMMNQRLWEQSGHWDHYRDNMYFSEVDDTRFAMKPMNCPGHMLIFKNSLYSYRDLPIRMAEFGQVHRHEYSGALNGMLRVRTFCQDDAHIFVREDQIESEIKEAIRLIDEVYRTFGFEYSVELSTRPEDSLGDDSLWEASERALARVLEELGLSYEINEGDGAFYGPKIDFHIKDALKRSHQCATIQLDFQMPEKFDLTYINELNEKVRPVVIHRAVFGSIDRFFGILIEHYGGAFPVWLAPIQVQIIPVSHVHLDYCRKVQAELKQAGIRAGIDERNEKLGYKIRESQVQKIPYVLVLGDHEEQENAVNVRRFGHQQNEHVPFQTFKDKLVKQVENRGM.

Residues 1–64 (MSKHVHIQLP…EEDAELSIVT (64 aa)) enclose the TGS domain. The interval 245 to 535 (DHRKLGKQLG…LIEHYGGAFP (291 aa)) is catalytic. Positions 336, 387, and 512 each coordinate Zn(2+).

It belongs to the class-II aminoacyl-tRNA synthetase family. Homodimer. Requires Zn(2+) as cofactor.

The protein localises to the cytoplasm. The catalysed reaction is tRNA(Thr) + L-threonine + ATP = L-threonyl-tRNA(Thr) + AMP + diphosphate + H(+). Catalyzes the attachment of threonine to tRNA(Thr) in a two-step reaction: L-threonine is first activated by ATP to form Thr-AMP and then transferred to the acceptor end of tRNA(Thr). Also edits incorrectly charged L-seryl-tRNA(Thr). In Bacillus subtilis (strain 168), this protein is Threonine--tRNA ligase 2 (thrZ).